A 208-amino-acid polypeptide reads, in one-letter code: 3-demethoxyubiquinol 3-hydroxylase (208 aa).

Residues glutamate 57, glutamate 87, histidine 90, glutamate 139, glutamate 171, and histidine 174 each coordinate Fe cation.

Belongs to the COQ7 family. It depends on Fe cation as a cofactor.

The protein resides in the cell membrane. The enzyme catalyses a 5-methoxy-2-methyl-3-(all-trans-polyprenyl)benzene-1,4-diol + AH2 + O2 = a 3-demethylubiquinol + A + H2O. It functions in the pathway cofactor biosynthesis; ubiquinone biosynthesis. Catalyzes the hydroxylation of 2-nonaprenyl-3-methyl-6-methoxy-1,4-benzoquinol during ubiquinone biosynthesis. This chain is 3-demethoxyubiquinol 3-hydroxylase, found in Burkholderia pseudomallei (strain 1106a).